A 924-amino-acid polypeptide reads, in one-letter code: Lipoxygenase 7, chloroplastic (924 aa).

The transit peptide at 1–61 directs the protein to the chloroplast; the sequence is MLRPQLNPSS…GQGSSRVVVV (61 aa). The PLAT domain maps to 88 to 218; that stretch reads AVATIKVTVG…VGDEGTPSKR (131 aa). The Lipoxygenase domain maps to 225-924; it reads TYLPGQTPAG…GMGIPNSTSI (700 aa). The disordered stretch occupies residues 231–315; that stretch reads TPAGLRSYRK…PKSETRKGNV (85 aa). Basic and acidic residues-rich tracts occupy residues 239-262 and 302-315; these read RKNDLQQKRGDGTGEREADDRVYD and SKKDPKSETRKGNV. Positions 581, 586, 773, 777, and 924 each coordinate Fe cation.

The protein belongs to the lipoxygenase family. The cofactor is Fe cation.

The protein localises to the plastid. Its subcellular location is the chloroplast. The catalysed reaction is (9Z,12Z)-octadecadienoate + O2 = (13S)-hydroperoxy-(9Z,11E)-octadecadienoate. It catalyses the reaction (9Z,12Z,15Z)-octadecatrienoate + O2 = (13S)-hydroperoxy-(9Z,11E,15Z)-octadecatrienoate. It participates in lipid metabolism; oxylipin biosynthesis. Plant lipoxygenase may be involved in a number of diverse aspects of plant physiology including growth and development, pest resistance, and senescence or responses to wounding. This lipoxygenase introduces molecular oxygen exclusively into the C-13 position of linoleic and linolenic acids. The protein is Lipoxygenase 7, chloroplastic (CM-LOX1) of Oryza sativa subsp. japonica (Rice).